The chain runs to 507 residues: ATP synthase subunit alpha, chloroplastic (507 aa).

170 to 177 (GDRQTGKT) provides a ligand contact to ATP.

The protein belongs to the ATPase alpha/beta chains family. In terms of assembly, F-type ATPases have 2 components, CF(1) - the catalytic core - and CF(0) - the membrane proton channel. CF(1) has five subunits: alpha(3), beta(3), gamma(1), delta(1), epsilon(1). CF(0) has four main subunits: a, b, b' and c.

It is found in the plastid. The protein resides in the chloroplast thylakoid membrane. It catalyses the reaction ATP + H2O + 4 H(+)(in) = ADP + phosphate + 5 H(+)(out). Its function is as follows. Produces ATP from ADP in the presence of a proton gradient across the membrane. The alpha chain is a regulatory subunit. The protein is ATP synthase subunit alpha, chloroplastic of Buxus microphylla (Littleleaf boxwood).